The following is a 282-amino-acid chain: Probable transcription factor At1g66420 (282 aa).

The segment at 33–73 (SKKNEEFCGGSGKVQPSEMKRRSEGTSTDMTSKRAKKVSAE) is disordered.

This sequence belongs to the GeBP family.

This Arabidopsis thaliana (Mouse-ear cress) protein is Probable transcription factor At1g66420.